Consider the following 181-residue polypeptide: uncharacterized protein (181 aa).

The Macro domain maps to 1 to 178 (MVVAYKLSNG…VFKKVFDNSL (178 aa)).

This is an uncharacterized protein from Sulfolobus acidocaldarius (strain ATCC 33909 / DSM 639 / JCM 8929 / NBRC 15157 / NCIMB 11770).